A 316-amino-acid chain; its full sequence is MTVQRKKISLIGAGNIGGALAHMVTLRELGDVVLFDVNDGIPQGKALDIAESSPIGGFSVNIIGTNRYGDIKNSDAIIITAGIARKPGMSRDDLLQTNAKVMKEVGENIRKYSPNAFVIVVTNPLDAMVSVVHKFSNLPANMIVGMAGVLDSSRFRYFLARELNISVEDVSAFVLGGHGDTMVPLIRCASIAGIPLTQIIDMGLITQEKVDEIVKRTRNGGKEIIDLLKSGSAYYAPASSSIYMLESYLRDEKRILPCATYLNGEYGVKDLFIGVPVIIGKNGIEKVLEVKMDDSEQEMFNKSVNAVKELVKSLSL.

NAD(+) is bound by residues 12–17 (GAGNIG) and D36. R85 and R91 together coordinate substrate. Residues N98 and 121–123 (VTN) contribute to the NAD(+) site. Residues N123 and R154 each coordinate substrate. Catalysis depends on H178, which acts as the Proton acceptor.

Belongs to the LDH/MDH superfamily. MDH type 3 family.

It carries out the reaction (S)-malate + NAD(+) = oxaloacetate + NADH + H(+). In terms of biological role, catalyzes the reversible oxidation of malate to oxaloacetate. This Wolbachia sp. subsp. Brugia malayi (strain TRS) protein is Malate dehydrogenase.